Consider the following 264-residue polypeptide: Thymidylate synthase (264 aa).

DUMP is bound at residue R21. H51 provides a ligand contact to (6R)-5,10-methylene-5,6,7,8-tetrahydrofolate. A dUMP-binding site is contributed by 126 to 127 (RR). C146 functions as the Nucleophile in the catalytic mechanism. DUMP contacts are provided by residues 166–169 (RSCD), N177, and 207–209 (HLY). Residue D169 participates in (6R)-5,10-methylene-5,6,7,8-tetrahydrofolate binding. A263 contributes to the (6R)-5,10-methylene-5,6,7,8-tetrahydrofolate binding site.

It belongs to the thymidylate synthase family. Bacterial-type ThyA subfamily. Homodimer.

It localises to the cytoplasm. The catalysed reaction is dUMP + (6R)-5,10-methylene-5,6,7,8-tetrahydrofolate = 7,8-dihydrofolate + dTMP. Its pathway is pyrimidine metabolism; dTTP biosynthesis. Its function is as follows. Catalyzes the reductive methylation of 2'-deoxyuridine-5'-monophosphate (dUMP) to 2'-deoxythymidine-5'-monophosphate (dTMP) while utilizing 5,10-methylenetetrahydrofolate (mTHF) as the methyl donor and reductant in the reaction, yielding dihydrofolate (DHF) as a by-product. This enzymatic reaction provides an intracellular de novo source of dTMP, an essential precursor for DNA biosynthesis. The protein is Thymidylate synthase of Edwardsiella ictaluri (strain 93-146).